The sequence spans 365 residues: Mitochondrial protein C2orf69 homolog (365 aa).

The N-terminal 24 residues, methionine 1–glycine 24, are a transit peptide targeting the mitochondrion. Residues serine 28–serine 64 are disordered. A compositionally biased stretch (polar residues) spans arginine 53–serine 64.

This sequence belongs to the C2orf69 family.

Its subcellular location is the mitochondrion matrix. Its function is as follows. May play a role in the respiratory chain. This chain is Mitochondrial protein C2orf69 homolog, found in Mus musculus (Mouse).